The following is a 430-amino-acid chain: Centrosomal protein CEP57L1 (430 aa).

Ser-45 is modified (phosphoserine). Positions 46–213 (PNNQALVSAL…HQRRLFQDRA (168 aa)) form a coiled coil. 2 disordered regions span residues 248–290 (CLKR…GEPF) and 362–430 (RKLQ…KWEQ). Composition is skewed to basic and acidic residues over residues 249-272 (LKRE…ERPP), 362-372 (RKLQEKVENSR), and 421-430 (LRRDDVKWEQ). The stretch at 290 to 377 (FSICDNLSEL…VENSRINESS (88 aa)) forms a coiled coil.

This sequence belongs to the translokin family.

Its subcellular location is the cytoplasm. The protein resides in the cytoskeleton. It localises to the microtubule organizing center. The protein localises to the centrosome. In terms of biological role, centrosomal protein which may be required for microtubule attachment to centrosomes. This is Centrosomal protein CEP57L1 (Cep57l1) from Rattus norvegicus (Rat).